The chain runs to 825 residues: Glycerol-3-phosphate acyltransferase (825 aa).

Residues 306 to 311 (CHRSHM) carry the HXXXXD motif motif. The interval 802-825 (SASSSTEMEASTSSSQTAEETTQG) is disordered.

Belongs to the GPAT/DAPAT family.

The protein resides in the cell inner membrane. It catalyses the reaction sn-glycerol 3-phosphate + an acyl-CoA = a 1-acyl-sn-glycero-3-phosphate + CoA. It participates in phospholipid metabolism; CDP-diacylglycerol biosynthesis; CDP-diacylglycerol from sn-glycerol 3-phosphate: step 1/3. This is Glycerol-3-phosphate acyltransferase from Pectobacterium atrosepticum (strain SCRI 1043 / ATCC BAA-672) (Erwinia carotovora subsp. atroseptica).